The primary structure comprises 414 residues: Esterase FrsA (414 aa).

This sequence belongs to the FrsA family.

The enzyme catalyses a carboxylic ester + H2O = an alcohol + a carboxylate + H(+). Its function is as follows. Catalyzes the hydrolysis of esters. This is Esterase FrsA from Escherichia coli O139:H28 (strain E24377A / ETEC).